The chain runs to 365 residues: Phospho-N-acetylmuramoyl-pentapeptide-transferase (365 aa).

10 consecutive transmembrane segments (helical) span residues 15-35, 51-71, 96-116, 121-141, 156-176, 180-200, 217-237, 238-258, 279-299, and 344-364; these read PSGT…AVLI, VPVL…VPLL, TMGG…FAGF, IAVA…DWQV, LILQ…TAPE, ITFF…LAGF, GLAG…ALPA, HPGL…FIYH, LAAA…SGIF, and TQIV…SFIL.

It belongs to the glycosyltransferase 4 family. MraY subfamily. Mg(2+) serves as cofactor.

The protein resides in the cell inner membrane. It carries out the reaction UDP-N-acetyl-alpha-D-muramoyl-L-alanyl-gamma-D-glutamyl-meso-2,6-diaminopimeloyl-D-alanyl-D-alanine + di-trans,octa-cis-undecaprenyl phosphate = di-trans,octa-cis-undecaprenyl diphospho-N-acetyl-alpha-D-muramoyl-L-alanyl-D-glutamyl-meso-2,6-diaminopimeloyl-D-alanyl-D-alanine + UMP. Its pathway is cell wall biogenesis; peptidoglycan biosynthesis. In terms of biological role, catalyzes the initial step of the lipid cycle reactions in the biosynthesis of the cell wall peptidoglycan: transfers peptidoglycan precursor phospho-MurNAc-pentapeptide from UDP-MurNAc-pentapeptide onto the lipid carrier undecaprenyl phosphate, yielding undecaprenyl-pyrophosphoryl-MurNAc-pentapeptide, known as lipid I. This is Phospho-N-acetylmuramoyl-pentapeptide-transferase from Picosynechococcus sp. (strain ATCC 27264 / PCC 7002 / PR-6) (Agmenellum quadruplicatum).